The chain runs to 553 residues: Adenine deaminase (553 aa).

It belongs to the metallo-dependent hydrolases superfamily. Adenine deaminase family. The cofactor is Mn(2+).

It catalyses the reaction adenine + H2O + H(+) = hypoxanthine + NH4(+). This chain is Adenine deaminase, found in Methanosarcina acetivorans (strain ATCC 35395 / DSM 2834 / JCM 12185 / C2A).